Consider the following 335-residue polypeptide: Urokinase plasminogen activator surface receptor (335 aa).

Residues 1–22 (MGHPLLLPLLLLLHTCVPASWG) form the signal peptide. 3 UPAR/Ly6 domains span residues 23-114 (LRCM…RSRY), 115-213 (LECI…PQNG), and 214-305 (HQCY…YRKG). 3 disulfide bridges follow: cysteine 25-cysteine 46, cysteine 28-cysteine 34, and cysteine 39-cysteine 67. Residue asparagine 74 is glycosylated (N-linked (GlcNAc...) asparagine). 11 cysteine pairs are disulfide-bonded: cysteine 93/cysteine 98, cysteine 117/cysteine 144, cysteine 120/cysteine 127, cysteine 137/cysteine 169, cysteine 175/cysteine 192, cysteine 193/cysteine 198, cysteine 216/cysteine 244, cysteine 219/cysteine 227, cysteine 237/cysteine 263, cysteine 269/cysteine 287, and cysteine 288/cysteine 293. Asparagine 184, asparagine 194, asparagine 222, asparagine 255, and asparagine 284 each carry an N-linked (GlcNAc...) asparagine glycan. Glycine 305 carries GPI-anchor amidated glycine lipidation. Residues 306-335 (AAPQPGPAHLSLTITLLMTARLWGGTLLWT) constitute a propeptide, removed in mature form.

As to quaternary structure, monomer. Interacts (via the UPAR/Ly6 domains) with SRPX2. Interacts with MRC2. Interacts with FAP (seprase); the interaction occurs at the cell surface of invadopodia membrane. Interacts with SORL1 (via N-terminal ectodomain); this interaction decreases PLAUR internalization. The ternary complex composed of PLAUR-PLAU-SERPINE1 also interacts with SORL1.

The protein localises to the cell membrane. It is found in the cell projection. The protein resides in the invadopodium membrane. Its function is as follows. Acts as a receptor for urokinase plasminogen activator. Plays a role in localizing and promoting plasmin formation. Mediates the proteolysis-independent signal transduction activation effects of U-PA. It is subject to negative-feedback regulation by U-PA which cleaves it into an inactive form. The protein is Urokinase plasminogen activator surface receptor (PLAUR) of Macaca fascicularis (Crab-eating macaque).